A 340-amino-acid polypeptide reads, in one-letter code: Adenosine deaminase (340 aa).

Zn(2+)-binding residues include His-15 and His-17. Substrate-binding residues include His-17, Asp-19, and Gly-172. Position 199 (His-199) interacts with Zn(2+). The Proton donor role is filled by Glu-202. Asp-279 serves as a coordination point for Zn(2+).

The protein belongs to the metallo-dependent hydrolases superfamily. Adenosine and AMP deaminases family. Adenosine deaminase subfamily. The cofactor is Zn(2+).

It catalyses the reaction adenosine + H2O + H(+) = inosine + NH4(+). It carries out the reaction 2'-deoxyadenosine + H2O + H(+) = 2'-deoxyinosine + NH4(+). Functionally, catalyzes the hydrolytic deamination of adenosine and 2-deoxyadenosine. This is Adenosine deaminase from Streptococcus agalactiae serotype Ia (strain ATCC 27591 / A909 / CDC SS700).